The primary structure comprises 170 residues: Arginine repressor (170 aa).

Belongs to the ArgR family.

Its subcellular location is the cytoplasm. It participates in amino-acid biosynthesis; L-arginine biosynthesis [regulation]. Functionally, regulates arginine biosynthesis genes. This Bifidobacterium longum (strain DJO10A) protein is Arginine repressor.